The chain runs to 104 residues: Chitin-binding protein 2 (104 aa).

As to quaternary structure, oligomer in an unreduced state. Post-translationally, glycosylated.

Functionally, chitin-binding protein. Has antifungal activity against C.krusei, C.albicans, C.tropicalis and C.parapsilosis. Inhibits C.albicans by increasing cell membrane permeability and production of reactive oxygen species. Has no hemagglutinating activity. The sequence is that of Chitin-binding protein 2 from Moringa oleifera (Horseradish tree).